A 235-amino-acid polypeptide reads, in one-letter code: Serine protease SplA (235 aa).

The first 35 residues, 1 to 35 (MNKNVMVKGLTALTILTSLGFAENISNQPHSIAKA), serve as a signal peptide directing secretion. Residues His-74, Asp-113, and Ser-189 each act as charge relay system in the active site.

This sequence belongs to the peptidase S1B family.

It is found in the secreted. This chain is Serine protease SplA (splA), found in Staphylococcus aureus (strain USA300).